We begin with the raw amino-acid sequence, 843 residues long: Potassium transporter 10 (843 aa).

The segment covering 1 to 15 has biased composition (low complexity); it reads MKSPSPVDPESPSSP. The disordered stretch occupies residues 1–25; sequence MKSPSPVDPESPSSPDCKGGSSSKR. At 1-34 the chain is on the cytoplasmic side; it reads MKSPSPVDPESPSSPDCKGGSSSKRRRLPWRMTM. Residues 35–55 traverse the membrane as a helical segment; sequence SLAYQSLGVVYGDLSTSPLYV. Residues 56-72 lie on the Vacuolar side of the membrane; that stretch reads YKAAFAEDIQHSETNEE. Residues 73 to 93 form a helical membrane-spanning segment; it reads ILGVLSFVFWTLTLVPLLKYV. The Cytoplasmic segment spans residues 94–183; sequence CVVLRADDNG…LLERHKVLQR (90 aa). Residues 184 to 204 form a helical membrane-spanning segment; it reads VLLVLALVGTCMVIGDGVLTP. Residues 205 to 225 lie on the Vacuolar side of the membrane; the sequence is AISVFSAVSGLELSMEKHQHK. The chain crosses the membrane as a helical span at residues 226 to 246; that stretch reads YVEVPIACFVLVCLFCLQHYG. Topologically, residues 247–249 are cytoplasmic; the sequence is THR. The helical transmembrane segment at 250 to 270 threads the bilayer; the sequence is VGFLFAPIVITWLLCISMIGV. Residues 271 to 298 are Vacuolar-facing; that stretch reads YNIVHWEPNVYRALSPYYMYKFLKKTQR. The helical transmembrane segment at 299-319 threads the bilayer; sequence GGWMSLGGILLCITGSEAMFA. The Cytoplasmic portion of the chain corresponds to 320 to 326; that stretch reads DLGHFNQ. Residues 327-347 traverse the membrane as a helical segment; that stretch reads LSIQIAFTCMVYPSLILAYMG. Over 348 to 377 the chain is Vacuolar; the sequence is QAAYLCKHHIIESDYRIGFYVSVPEKIRWP. Residues 378 to 398 traverse the membrane as a helical segment; it reads VLAIAILAAVVGSQAVITGTF. The Cytoplasmic segment spans residues 399 to 425; it reads SMIKQCTALGCFPRVKIVHTSDKVHGQ. The helical transmembrane segment at 426-446 threads the bilayer; that stretch reads IYIPEINWILMILCLAITIGF. The Vacuolar segment spans residues 447–451; the sequence is RDTKH. A helical transmembrane segment spans residues 452–472; the sequence is LGNASGLAVITVMLVTTCLMS. Over 473-482 the chain is Cytoplasmic; it reads LVIVLCWHKS. The chain crosses the membrane as a helical span at residues 483–505; the sequence is IFLAFGFIIFFGTIEALYFSASL. Residues 506–510 are Vacuolar-facing; sequence IKFRE. A helical membrane pass occupies residues 511 to 531; sequence GAWVPIVLAFIFMAIMCIWHY. At 532-843 the chain is on the cytoplasmic side; that stretch reads GTIKKYEFDL…TLEVGMIYYV (312 aa). A disordered region spans residues 667–747; it reads AASSKPKNVC…IMSPSPSPPP (81 aa). Residues 718 to 735 are compositionally biased toward gly residues; that stretch reads GGSGSGSGRGSSRGGGGA.

This sequence belongs to the HAK/KUP transporter (TC 2.A.72.3) family. In terms of tissue distribution, expressed in roots, shoots, and panicle at flowering stage.

Its subcellular location is the vacuole membrane. Functionally, high-affinity potassium transporter. This chain is Potassium transporter 10 (HAK10), found in Oryza sativa subsp. japonica (Rice).